A 101-amino-acid chain; its full sequence is Protein SSXA1 (101 aa).

A KRAB-related domain is found at 19 to 83 (ETCQAFEDIS…ERVTKSVLSD (65 aa)). Residues 73-101 (KERVTKSVLSDSDEVSSHESQDKRKNPVV) are disordered. Over residues 87-101 (VSSHESQDKRKNPVV) the composition is skewed to basic and acidic residues.

This sequence belongs to the SSX family. Specifically expressed in testis (at protein level). Not detected in other tissues tested (at protein level).

It is found in the nucleus. Could act as a modulator of transcription. The protein is Protein SSXA1 of Mus musculus (Mouse).